We begin with the raw amino-acid sequence, 432 residues long: Enolase (432 aa).

A (2R)-2-phosphoglycerate-binding site is contributed by Gln168. Glu210 functions as the Proton donor in the catalytic mechanism. Positions 247, 288, and 315 each coordinate Mg(2+). (2R)-2-phosphoglycerate is bound by residues Lys340, Arg369, Ser370, and Lys391. Lys340 (proton acceptor) is an active-site residue.

Belongs to the enolase family. It depends on Mg(2+) as a cofactor.

The protein localises to the cytoplasm. Its subcellular location is the secreted. It localises to the cell surface. It catalyses the reaction (2R)-2-phosphoglycerate = phosphoenolpyruvate + H2O. It participates in carbohydrate degradation; glycolysis; pyruvate from D-glyceraldehyde 3-phosphate: step 4/5. Catalyzes the reversible conversion of 2-phosphoglycerate (2-PG) into phosphoenolpyruvate (PEP). It is essential for the degradation of carbohydrates via glycolysis. The polypeptide is Enolase (Microcystis aeruginosa (strain NIES-843 / IAM M-2473)).